A 565-amino-acid polypeptide reads, in one-letter code: Thiol:disulfide interchange protein DsbD (565 aa).

An N-terminal signal peptide occupies residues methionine 1–alanine 19. 2 disulfide bridges follow: cysteine 122–cysteine 128 and cysteine 182–cysteine 304. Helical transmembrane passes span leucine 163–valine 183, leucine 208–valine 228, tyrosine 243–phenylalanine 263, isoleucine 296–isoleucine 316, tryptophan 323–isoleucine 343, phenylalanine 365–tryptophan 385, and glycine 386–leucine 406. Residues tryptophan 434–proline 565 enclose the Thioredoxin domain. Cysteine 480 and cysteine 483 are joined by a disulfide.

It belongs to the thioredoxin family. DsbD subfamily.

It localises to the cell inner membrane. It carries out the reaction [protein]-dithiol + NAD(+) = [protein]-disulfide + NADH + H(+). It catalyses the reaction [protein]-dithiol + NADP(+) = [protein]-disulfide + NADPH + H(+). Functionally, required to facilitate the formation of correct disulfide bonds in some periplasmic proteins and for the assembly of the periplasmic c-type cytochromes. Acts by transferring electrons from cytoplasmic thioredoxin to the periplasm. This transfer involves a cascade of disulfide bond formation and reduction steps. This is Thiol:disulfide interchange protein DsbD from Shigella dysenteriae serotype 1 (strain Sd197).